The following is a 447-amino-acid chain: Glucose-6-phosphate isomerase (447 aa).

The Proton donor role is filled by Glu289. Residues His310 and Lys424 contribute to the active site.

This sequence belongs to the GPI family.

It is found in the cytoplasm. The catalysed reaction is alpha-D-glucose 6-phosphate = beta-D-fructose 6-phosphate. The protein operates within carbohydrate biosynthesis; gluconeogenesis. It participates in carbohydrate degradation; glycolysis; D-glyceraldehyde 3-phosphate and glycerone phosphate from D-glucose: step 2/4. In terms of biological role, catalyzes the reversible isomerization of glucose-6-phosphate to fructose-6-phosphate. This Parabacteroides distasonis (strain ATCC 8503 / DSM 20701 / CIP 104284 / JCM 5825 / NCTC 11152) protein is Glucose-6-phosphate isomerase.